The primary structure comprises 36 residues: MISAYLPSFFVPLVCLVFPAIAMAFLFVQIEKEEIV.

A helical membrane pass occupies residues 8 to 28 (SFFVPLVCLVFPAIAMAFLFV).

It belongs to the PsaI family.

It is found in the plastid. The protein localises to the chloroplast thylakoid membrane. Its function is as follows. May help in the organization of the PsaL subunit. This is Photosystem I reaction center subunit VIII from Chara vulgaris (Common stonewort).